We begin with the raw amino-acid sequence, 368 residues long: 3-dehydroquinate synthase (368 aa).

Residues 80 to 85 (DAESAK), 114 to 118 (GAATD), 138 to 139 (TT), lysine 151, and lysine 160 each bind NAD(+). Zn(2+)-binding residues include glutamate 193, histidine 255, and histidine 271.

The protein belongs to the sugar phosphate cyclases superfamily. Dehydroquinate synthase family. Co(2+) is required as a cofactor. The cofactor is Zn(2+). It depends on NAD(+) as a cofactor.

The protein localises to the cytoplasm. It catalyses the reaction 7-phospho-2-dehydro-3-deoxy-D-arabino-heptonate = 3-dehydroquinate + phosphate. It participates in metabolic intermediate biosynthesis; chorismate biosynthesis; chorismate from D-erythrose 4-phosphate and phosphoenolpyruvate: step 2/7. Functionally, catalyzes the conversion of 3-deoxy-D-arabino-heptulosonate 7-phosphate (DAHP) to dehydroquinate (DHQ). The polypeptide is 3-dehydroquinate synthase (Corynebacterium jeikeium (strain K411)).